A 400-amino-acid chain; its full sequence is CCA-adding enzyme (400 aa).

ATP contacts are provided by G8 and R11. CTP is bound by residues G8 and R11. Residues D21 and D23 each coordinate Mg(2+). Positions 91, 137, and 140 each coordinate ATP. 3 residues coordinate CTP: R91, R137, and R140. An HD domain is found at 217 to 322 (NFQYAMTALK…IDLFNKWDVW (106 aa)).

Belongs to the tRNA nucleotidyltransferase/poly(A) polymerase family. Bacterial CCA-adding enzyme type 2 subfamily. It depends on Mg(2+) as a cofactor.

The enzyme catalyses a tRNA precursor + 2 CTP + ATP = a tRNA with a 3' CCA end + 3 diphosphate. It catalyses the reaction a tRNA with a 3' CCA end + 2 CTP + ATP = a tRNA with a 3' CCACCA end + 3 diphosphate. In terms of biological role, catalyzes the addition and repair of the essential 3'-terminal CCA sequence in tRNAs without using a nucleic acid template. Adds these three nucleotides in the order of C, C, and A to the tRNA nucleotide-73, using CTP and ATP as substrates and producing inorganic pyrophosphate. tRNA 3'-terminal CCA addition is required both for tRNA processing and repair. Also involved in tRNA surveillance by mediating tandem CCA addition to generate a CCACCA at the 3' terminus of unstable tRNAs. While stable tRNAs receive only 3'-terminal CCA, unstable tRNAs are marked with CCACCA and rapidly degraded. The protein is CCA-adding enzyme of Actinobacillus succinogenes (strain ATCC 55618 / DSM 22257 / CCUG 43843 / 130Z).